Reading from the N-terminus, the 51-residue chain is UPF0181 protein VV2_0310 (51 aa).

It belongs to the UPF0181 family.

The sequence is that of UPF0181 protein VV2_0310 from Vibrio vulnificus (strain CMCP6).